The chain runs to 447 residues: Rab GDP dissociation inhibitor alpha (447 aa).

Serine 427 is modified (phosphoserine).

This sequence belongs to the Rab GDI family. In terms of assembly, interacts with RHOH. Interacts with the non-phosphorylated forms of RAB1A, RAB3A, RAB5A, RAB5B, RAB5C, RAB8A, RAB8B, RAB12, RAB35, and RAB43. Interacts with RAB10. As to expression, high expression in brain, lower in other tissues.

It is found in the cytoplasm. Its subcellular location is the golgi apparatus. The protein resides in the trans-Golgi network. Functionally, regulates the GDP/GTP exchange reaction of most Rab proteins by inhibiting the dissociation of GDP from them, and the subsequent binding of GTP to them. Promotes the dissociation of GDP-bound Rab proteins from the membrane and inhibits their activation. Promotes the dissociation of RAB1A, RAB3A, RAB5A and RAB10 from membranes. The polypeptide is Rab GDP dissociation inhibitor alpha (Gdi1) (Mus musculus (Mouse)).